The sequence spans 605 residues: MAPSSPEVSRIRNFCIIAHIDHGKSTLADRLLEMTHTLDRTQMDSAQVLDDMDLERERGITIKSHAVQMKYCSVAGDDYTLNLIDTPGHVDFSYEVSRSLAACEGALLVVDATQGVEAQTIANLYLAIEAGLEIIPVINKIDLPSSDVEGVARQIIDLIGIEREEILQVSAKAGLGVAELMEAIIARVPAPADNRKQPLRALIFDSVFDPYRGAVVYLRIVDGVLRRGEKVRFFANDKIFLADEIGTMALKRQPKEVLEAGDVGYLICSIKDVKDAKVGDTVTHAEVPAEKRLAGYKDVKPMVFSGLYPVNSNEFEDLRESLEKLSLNDASLVYTPETSVALGFGFRCGFLGLLHMEIIQERLEREYDMNIITTVPNVEYRVIMTNGETVIVDNPSKMPDTTRIAHVEEPYVSMQIITLADYIGNIMKLGMERRGEYRNTDYLDTQRVNMHFEFPLAEIVFDFHDRLKSISKGYASMDYEYIGYRESDLVKLDVLLNAEPVDALSIIVHRSKAYDWGRKLCGKLKGIIPKQMYEVAIQAAIGSRIISRETISAMRKNVLAKCYGGDISRKRKLLEKQKEGKKRMKQVGRVEVPQEAFLAILNIDE.

One can recognise a tr-type G domain in the interval 9–192; sequence SRIRNFCIIA…AIIARVPAPA (184 aa). Residues 21–26 and 139–142 contribute to the GTP site; these read DHGKST and NKID.

Belongs to the TRAFAC class translation factor GTPase superfamily. Classic translation factor GTPase family. LepA subfamily.

It localises to the cell inner membrane. It carries out the reaction GTP + H2O = GDP + phosphate + H(+). Functionally, required for accurate and efficient protein synthesis under certain stress conditions. May act as a fidelity factor of the translation reaction, by catalyzing a one-codon backward translocation of tRNAs on improperly translocated ribosomes. Back-translocation proceeds from a post-translocation (POST) complex to a pre-translocation (PRE) complex, thus giving elongation factor G a second chance to translocate the tRNAs correctly. Binds to ribosomes in a GTP-dependent manner. The protein is Elongation factor 4 of Chlorobium luteolum (strain DSM 273 / BCRC 81028 / 2530) (Pelodictyon luteolum).